A 154-amino-acid chain; its full sequence is Ribosomal RNA large subunit methyltransferase H (154 aa).

Residues glycine 103 and 122–127 (FSKLTF) contribute to the S-adenosyl-L-methionine site.

This sequence belongs to the RNA methyltransferase RlmH family. Homodimer.

It localises to the cytoplasm. It carries out the reaction pseudouridine(1915) in 23S rRNA + S-adenosyl-L-methionine = N(3)-methylpseudouridine(1915) in 23S rRNA + S-adenosyl-L-homocysteine + H(+). Specifically methylates the pseudouridine at position 1915 (m3Psi1915) in 23S rRNA. The chain is Ribosomal RNA large subunit methyltransferase H from Caldicellulosiruptor bescii (strain ATCC BAA-1888 / DSM 6725 / KCTC 15123 / Z-1320) (Anaerocellum thermophilum).